An 804-amino-acid chain; its full sequence is G-type lectin S-receptor-like serine/threonine-protein kinase At1g61490 (804 aa).

Positions 1 to 24 (MGKKRIVFFACLLLFTVLLRFSYA) are cleaved as a signal peptide. A Bulb-type lectin domain is found at 25-144 (GITTESPLSV…ASGRTLWESF (120 aa)). At 25 to 425 (GITTESPLSV…SELGGNKRNK (401 aa)) the chain is on the extracellular side. N-linked (GlcNAc...) asparagine glycans are attached at residues asparagine 53, asparagine 94, asparagine 117, asparagine 134, asparagine 236, and asparagine 267. The EGF-like domain maps to 278 to 314 (PANSCDIYGVCGPFGLCIVSVPLKCKCLKGFVPHSTE). Disulfide bonds link cysteine 282–cysteine 294 and cysteine 288–cysteine 302. Asparagine 320, asparagine 336, and asparagine 375 each carry an N-linked (GlcNAc...) asparagine glycan. Residues 333–415 (CQGNSTGKDV…GEILSIRLAH (83 aa)) form the PAN domain. Intrachain disulfides connect cysteine 368–cysteine 389 and cysteine 372–cysteine 378. Residues 426 to 446 (IIVASTVSLSLFVILTSAAFG) form a helical membrane-spanning segment. At 447 to 804 (FWRYRVKHKA…EMTQSMILGR (358 aa)) the chain is on the cytoplasmic side. The region spanning 490-775 (FSLSNKLGQG…DLPSPKQPTF (286 aa)) is the Protein kinase domain. Residues 496-504 (LGQGGFGSV) and lysine 518 each bind ATP. Residues serine 524 and serine 539 each carry the phosphoserine modification. Residues 579 to 596 (RKKLEVDWPKRFDIVQGI) are caM-binding. The active-site Proton acceptor is the aspartate 615. Phosphoserine is present on residues serine 619 and serine 632. Residue threonine 649 is modified to Phosphothreonine. Phosphoserine is present on serine 692.

Belongs to the protein kinase superfamily. Ser/Thr protein kinase family.

Its subcellular location is the cell membrane. The enzyme catalyses L-seryl-[protein] + ATP = O-phospho-L-seryl-[protein] + ADP + H(+). The catalysed reaction is L-threonyl-[protein] + ATP = O-phospho-L-threonyl-[protein] + ADP + H(+). This chain is G-type lectin S-receptor-like serine/threonine-protein kinase At1g61490, found in Arabidopsis thaliana (Mouse-ear cress).